We begin with the raw amino-acid sequence, 361 residues long: (S)-coclaurine N-methyltransferase (361 aa).

S101, G139, N163, Q167, D189, I190, and V205 together coordinate S-adenosyl-L-methionine. The active site involves C336.

Belongs to the CFA/CMAS family. As to quaternary structure, homodimer. As to expression, highly expressed in rhizomes. Detected in roots, petioles, flower buds and leaves. Expressed between the developing stele and ground tissues near the root apical meristem, in the immature endodermis, the pericycle and the spokes of developing xylem in the apical region of the root and in the protoderm of leaf primordia in rhizomes.

It localises to the cytoplasm. The catalysed reaction is norreticuline + S-adenosyl-L-methionine = reticuline + S-adenosyl-L-homocysteine + H(+). The enzyme catalyses (S)-coclaurine + S-adenosyl-L-methionine = (S)-N-methylcoclaurine + S-adenosyl-L-homocysteine + H(+). It catalyses the reaction heliamine + S-adenosyl-L-methionine = N-methylheliamine + S-adenosyl-L-homocysteine + H(+). It participates in alkaloid biosynthesis. In terms of biological role, involved in the biosynthesis of protoberberine alkaloids. N-methyltransferase with a substrate preference for (R,S)-norreticuline but also active with dimethoxytetrahydroisoquinoline. The sequence is that of (S)-coclaurine N-methyltransferase from Thalictrum flavum subsp. glaucum (Yellow meadow rue).